The sequence spans 115 residues: Large ribosomal subunit protein uL22 (115 aa).

The protein belongs to the universal ribosomal protein uL22 family. Part of the 50S ribosomal subunit.

Its function is as follows. This protein binds specifically to 23S rRNA; its binding is stimulated by other ribosomal proteins, e.g. L4, L17, and L20. It is important during the early stages of 50S assembly. It makes multiple contacts with different domains of the 23S rRNA in the assembled 50S subunit and ribosome. The globular domain of the protein is located near the polypeptide exit tunnel on the outside of the subunit, while an extended beta-hairpin is found that lines the wall of the exit tunnel in the center of the 70S ribosome. The chain is Large ribosomal subunit protein uL22 from Lactiplantibacillus plantarum (strain ATCC BAA-793 / NCIMB 8826 / WCFS1) (Lactobacillus plantarum).